A 114-amino-acid chain; its full sequence is Large ribosomal subunit protein uL22 (114 aa).

It belongs to the universal ribosomal protein uL22 family. As to quaternary structure, part of the 50S ribosomal subunit.

Its function is as follows. This protein binds specifically to 23S rRNA; its binding is stimulated by other ribosomal proteins, e.g. L4, L17, and L20. It is important during the early stages of 50S assembly. It makes multiple contacts with different domains of the 23S rRNA in the assembled 50S subunit and ribosome. In terms of biological role, the globular domain of the protein is located near the polypeptide exit tunnel on the outside of the subunit, while an extended beta-hairpin is found that lines the wall of the exit tunnel in the center of the 70S ribosome. In Alcanivorax borkumensis (strain ATCC 700651 / DSM 11573 / NCIMB 13689 / SK2), this protein is Large ribosomal subunit protein uL22.